The chain runs to 515 residues: MGHNGSWISPNASEPHNASGAEAAGVNRSALGEFGEAQLYRQFTTTVQVVIFIGSLLGNFMVLWSTCRTTVFKSVTNRFIKNLACSGICASLVCVPFDIILSTSPHCCWWIYTMLFCKVVKFLHKVFCSVTILSFPAIALDRYYSVLYPLERKISDAKSRELVMYIWAHAVVASVPVFAVTNVADIYATSTCTEVWSNSLGHLVYVLVYNITTVIVPVVVVFLFLILIRRALSASQKKKVIIAALRTPQNTISIPYASQREAELHATLLSMVMVFILCSVPYATLVVYQTVLNVPDTSVFLLLTAVWLPKVSLLANPVLFLTVNKSVRKCLIGTLVQLHHRYSRRNVVSTGSGMAEASLEPSIRSGSQLLEMFHIGQQQIFKPTEDEEESEAKYIGSADFQAKEIFSTCLEGEQGPQFAPSAPPLSTVDSVSQVAPAAPVEPETFPDKYSLQFGFGPFELPPQWLSETRNSKKRLLPPLGNTPEELIQTKVPKVGRVERKMSRNNKVSIFPKVDS.

Over residues 1–16 the composition is skewed to polar residues; it reads MGHNGSWISPNASEPH. The segment at 1 to 20 is disordered; sequence MGHNGSWISPNASEPHNASG. The Extracellular segment spans residues 1 to 42; the sequence is MGHNGSWISPNASEPHNASGAEAAGVNRSALGEFGEAQLYRQ. Residues asparagine 4, asparagine 11, asparagine 17, and asparagine 27 are each glycosylated (N-linked (GlcNAc...) asparagine). Residues 43 to 63 form a helical membrane-spanning segment; it reads FTTTVQVVIFIGSLLGNFMVL. Over 64–82 the chain is Cytoplasmic; it reads WSTCRTTVFKSVTNRFIKN. A helical membrane pass occupies residues 83-103; it reads LACSGICASLVCVPFDIILST. The Extracellular portion of the chain corresponds to 104-118; it reads SPHCCWWIYTMLFCK. The chain crosses the membrane as a helical span at residues 119-139; it reads VVKFLHKVFCSVTILSFPAIA. At 140 to 160 the chain is on the cytoplasmic side; it reads LDRYYSVLYPLERKISDAKSR. Residues 161-181 form a helical membrane-spanning segment; sequence ELVMYIWAHAVVASVPVFAVT. Residues 182 to 207 are Extracellular-facing; sequence NVADIYATSTCTEVWSNSLGHLVYVL. The helical transmembrane segment at 208 to 228 threads the bilayer; it reads VYNITTVIVPVVVVFLFLILI. The Cytoplasmic segment spans residues 229–267; sequence RRALSASQKKKVIIAALRTPQNTISIPYASQREAELHAT. The helical transmembrane segment at 268–288 threads the bilayer; the sequence is LLSMVMVFILCSVPYATLVVY. Topologically, residues 289 to 299 are extracellular; sequence QTVLNVPDTSV. The chain crosses the membrane as a helical span at residues 300–320; it reads FLLLTAVWLPKVSLLANPVLF. Residues 321–515 are Cytoplasmic-facing; that stretch reads LTVNKSVRKC…KVSIFPKVDS (195 aa).

This sequence belongs to the G-protein coupled receptor 1 family.

The protein resides in the cell membrane. Its function is as follows. Orphan receptor involved in normal circadian rhythm behavior. Acts through the G-protein subclass G(z)-alpha and has an agonist-independent basal activity to repress cAMP production. In Homo sapiens (Human), this protein is G-protein coupled receptor 176 (GPR176).